The sequence spans 515 residues: Maturase K (515 aa).

Belongs to the intron maturase 2 family. MatK subfamily.

The protein resides in the plastid. It is found in the chloroplast. Functionally, usually encoded in the trnK tRNA gene intron. Probably assists in splicing its own and other chloroplast group II introns. This chain is Maturase K, found in Pinus pumila (Dwarf Siberian pine).